The chain runs to 620 residues: Chaperone protein HscA homolog (620 aa).

This sequence belongs to the heat shock protein 70 family.

In terms of biological role, chaperone involved in the maturation of iron-sulfur cluster-containing proteins. Has a low intrinsic ATPase activity which is markedly stimulated by HscB. This Pseudomonas entomophila (strain L48) protein is Chaperone protein HscA homolog.